The chain runs to 868 residues: DNA mismatch repair protein MutS (868 aa).

An ATP-binding site is contributed by 620–627 (GPNMSGKS).

This sequence belongs to the DNA mismatch repair MutS family.

In terms of biological role, this protein is involved in the repair of mismatches in DNA. It is possible that it carries out the mismatch recognition step. This protein has a weak ATPase activity. This chain is DNA mismatch repair protein MutS, found in Flavobacterium johnsoniae (strain ATCC 17061 / DSM 2064 / JCM 8514 / BCRC 14874 / CCUG 350202 / NBRC 14942 / NCIMB 11054 / UW101) (Cytophaga johnsonae).